Here is a 441-residue protein sequence, read N- to C-terminus: Glutamate--tRNA ligase 2 (441 aa).

The 'HIGH' region signature appears at 6–16 (PSPTGDMHIGN). A 'KMSKS' region motif is present at residues 231–235 (KMSKR). ATP is bound at residue Lys234.

This sequence belongs to the class-I aminoacyl-tRNA synthetase family. Glutamate--tRNA ligase type 1 subfamily. As to quaternary structure, monomer.

It localises to the cytoplasm. The catalysed reaction is tRNA(Glu) + L-glutamate + ATP = L-glutamyl-tRNA(Glu) + AMP + diphosphate. Functionally, catalyzes the attachment of glutamate to tRNA(Glu) in a two-step reaction: glutamate is first activated by ATP to form Glu-AMP and then transferred to the acceptor end of tRNA(Glu). This chain is Glutamate--tRNA ligase 2, found in Helicobacter hepaticus (strain ATCC 51449 / 3B1).